Consider the following 610-residue polypeptide: DNA mismatch repair protein MutL (610 aa).

Belongs to the DNA mismatch repair MutL/HexB family.

In terms of biological role, this protein is involved in the repair of mismatches in DNA. It is required for dam-dependent methyl-directed DNA mismatch repair. May act as a 'molecular matchmaker', a protein that promotes the formation of a stable complex between two or more DNA-binding proteins in an ATP-dependent manner without itself being part of a final effector complex. This is DNA mismatch repair protein MutL from Rickettsia africae (strain ESF-5).